We begin with the raw amino-acid sequence, 213 residues long: Uridine kinase (213 aa).

Position 15–22 (15–22 (GASASGKS)) interacts with ATP.

It belongs to the uridine kinase family.

It localises to the cytoplasm. It carries out the reaction uridine + ATP = UMP + ADP + H(+). The enzyme catalyses cytidine + ATP = CMP + ADP + H(+). Its pathway is pyrimidine metabolism; CTP biosynthesis via salvage pathway; CTP from cytidine: step 1/3. It functions in the pathway pyrimidine metabolism; UMP biosynthesis via salvage pathway; UMP from uridine: step 1/1. This Cronobacter sakazakii (strain ATCC BAA-894) (Enterobacter sakazakii) protein is Uridine kinase.